Here is a 114-residue protein sequence, read N- to C-terminus: rRNA-processing protein cgrA (114 aa).

Residues 1–13 are compositionally biased toward low complexity; that stretch reads MSSAAPAPSTHAA. 2 disordered regions span residues 1–47 and 77–114; these read MSSA…AARK and RRAAKEEKERYEKMAEKMHRKRVERLKKREKRNKLLNS. Residues 40–101 adopt a coiled-coil conformation; sequence TKRAAARKEQ…EKMHRKRVER (62 aa). The span at 77 to 93 shows a compositional bias: basic and acidic residues; it reads RRAAKEEKERYEKMAEK. A compositionally biased stretch (basic residues) spans 94-114; that stretch reads MHRKRVERLKKREKRNKLLNS.

This sequence belongs to the CGR1 family.

The protein resides in the nucleus. It is found in the nucleolus. Involved in nucleolar integrity and required for processing of the pre-rRNA for the 60S ribosome subunit. This is rRNA-processing protein cgrA (cgrA) from Emericella nidulans (strain FGSC A4 / ATCC 38163 / CBS 112.46 / NRRL 194 / M139) (Aspergillus nidulans).